A 43-amino-acid chain; its full sequence is Hainantoxin F5-22.36 (43 aa).

3 disulfide bridges follow: Cys-1–Cys-19, Cys-8–Cys-24, and Cys-18–Cys-38.

The protein belongs to the neurotoxin 14 (magi-1) family. 02 (HWTX-XVIc) subfamily. In terms of tissue distribution, expressed by the venom gland.

The protein localises to the secreted. Its function is as follows. Probable ion channel inhibitor. This Cyriopagopus hainanus (Chinese bird spider) protein is Hainantoxin F5-22.36.